We begin with the raw amino-acid sequence, 932 residues long: Glycine dehydrogenase (decarboxylating) (932 aa).

An N6-(pyridoxal phosphate)lysine modification is found at Lys-685.

Belongs to the GcvP family. As to quaternary structure, the glycine cleavage system is composed of four proteins: P, T, L and H. Pyridoxal 5'-phosphate serves as cofactor.

The enzyme catalyses N(6)-[(R)-lipoyl]-L-lysyl-[glycine-cleavage complex H protein] + glycine + H(+) = N(6)-[(R)-S(8)-aminomethyldihydrolipoyl]-L-lysyl-[glycine-cleavage complex H protein] + CO2. Its function is as follows. The glycine cleavage system catalyzes the degradation of glycine. The P protein binds the alpha-amino group of glycine through its pyridoxal phosphate cofactor; CO(2) is released and the remaining methylamine moiety is then transferred to the lipoamide cofactor of the H protein. The chain is Glycine dehydrogenase (decarboxylating) from Brucella suis (strain ATCC 23445 / NCTC 10510).